Consider the following 593-residue polypeptide: Transcriptional repressor p66-beta (593 aa).

Phosphoserine is present on Ser-17. Glycyl lysine isopeptide (Lys-Gly) (interchain with G-Cter in SUMO2) cross-links involve residues Lys-33, Lys-66, and Lys-97. The disordered stretch occupies residues 62-123; it reads ELPTKQDGSG…PERGRLTPSP (62 aa). Composition is skewed to basic and acidic residues over residues 74–100 and 108–118; these read GYEE…KENI and SARRSEPERGR. Position 120 is a phosphothreonine (Thr-120). Residues Ser-122, Ser-129, Ser-134, and Ser-135 each carry the phosphoserine modification. Residues 140-194 are a coiled coil; that stretch reads SRMEERLKAANLEMFKGKGIEERQQLIKQLRDELRLEEARLVLLKKLRQSQLQKE. A Glycyl lysine isopeptide (Lys-Gly) (interchain with G-Cter in SUMO2) cross-link involves residue Lys-147. The CR1; interaction with MBD2 and MBD3 stretch occupies residues 165–195; the sequence is LIKQLRDELRLEEARLVLLKKLRQSQLQKEN. A Glycyl lysine isopeptide (Lys-Gly) (interchain with G-Cter in SUMO2) cross-link involves residue Lys-199. Ser-208 carries the post-translational modification Phosphoserine. A disordered region spans residues 213–235; it reads SPAHVGQQGLSKLPSRPGAQGVE. Lys-281 is covalently cross-linked (Glycyl lysine isopeptide (Lys-Gly) (interchain with G-Cter in SUMO2)). Residues Ser-333, Ser-338, and Ser-340 each carry the phosphoserine modification. The CR2; histone tail-binding stretch occupies residues 340–480; sequence SAMTDAANSQ…QEQEIEQRLQ (141 aa). Residues Lys-353, Lys-454, and Lys-467 each participate in a glycyl lysine isopeptide (Lys-Gly) (interchain with G-Cter in SUMO2) cross-link. The segment at 414 to 467 adopts a GATA-type zinc-finger fold; that stretch reads RVEPFVCAQCRTDFTPHWKQEKNGKILCEQCMTSNQKKALKAEHTNRLKNAFVK. A coiled-coil region spans residues 449 to 482; sequence QKKALKAEHTNRLKNAFVKALQQEQEIEQRLQQQ. Phosphoserine is present on Ser-486. Lys-498 participates in a covalent cross-link: Glycyl lysine isopeptide (Lys-Gly) (interchain with G-Cter in SUMO2).

Homooligomer. Component of the nucleosome remodeling and deacetylase (NuRD) repressor complex, composed of core proteins MTA1, MTA2, MTA3, RBBP4, RBBP7, HDAC1, HDAC2, MBD2, MBD3, and peripherally associated proteins CDK2AP1, CDK2AP2, GATAD2A, GATAD2B, CHD3, CHD4 and CHD5. The exact stoichiometry of the NuRD complex is unknown, and some subunits such as MBD2 and MBD3, GATAD2A and GATAD2B, and CHD3, CHD4 and CHD5 define mutually exclusive NuRD complexes. Interacts with MBD2; this is required for the enhancement of MBD2-mediated repression and for targeting to the chromatin. Interacts with MBD3. Component of the MeCP1 histone deacetylase complex. Interacts with histone tails, including that of histones H2A, H2B, H3 and H4. Interacts with ERCC6. As to expression, widely expressed.

The protein resides in the nucleus speckle. It localises to the nucleus. The protein localises to the chromosome. Its function is as follows. Transcriptional repressor. Acts as a component of the histone deacetylase NuRD complex which participates in the remodeling of chromatin. Enhances MBD2-mediated repression. Efficient repression requires the presence of GATAD2A. Targets MBD3 to discrete loci in the nucleus. May play a role in synapse development. The sequence is that of Transcriptional repressor p66-beta (GATAD2B) from Homo sapiens (Human).